We begin with the raw amino-acid sequence, 309 residues long: Homoserine O-succinyltransferase (309 aa).

Cys142 (acyl-thioester intermediate) is an active-site residue. Residues Lys163 and Ser192 each coordinate substrate. His235 serves as the catalytic Proton acceptor. Glu237 is an active-site residue. Arg249 lines the substrate pocket.

Belongs to the MetA family.

It is found in the cytoplasm. The enzyme catalyses L-homoserine + succinyl-CoA = O-succinyl-L-homoserine + CoA. It functions in the pathway amino-acid biosynthesis; L-methionine biosynthesis via de novo pathway; O-succinyl-L-homoserine from L-homoserine: step 1/1. Transfers a succinyl group from succinyl-CoA to L-homoserine, forming succinyl-L-homoserine. The chain is Homoserine O-succinyltransferase from Erwinia tasmaniensis (strain DSM 17950 / CFBP 7177 / CIP 109463 / NCPPB 4357 / Et1/99).